The primary structure comprises 134 residues: Replication enhancer protein (134 aa).

The protein belongs to the geminiviridae replication enhancer protein family. As to quaternary structure, homooligomer. Interacts with the replication-associated protein (REP). Interacts with host proliferating cell nuclear antigen (PCNA). Interacts with host retinoblastoma-related protein 1 (RBR1), and may thereby deregulate the host cell cycle. Oligomerization and interaction with PCNA are necessary for optimal replication enhancement.

Functionally, increases viral DNA accumulation. Enhances infectivity and symptom expression. The polypeptide is Replication enhancer protein (Cynanchum acutum (Tomato)).